Consider the following 514-residue polypeptide: Uridylate cyclase (514 aa).

Guanylate cyclase domains follow at residues 49–190 and 286–428; these read VHMY…AKLA and VSLY…EKRQ. Residues tyrosine 52, arginine 105, phenylalanine 178, 184-188, and 291-296 contribute to the a ribonucleoside 5'-triphosphate site; these read NHAAK and DIDGFT. Residues aspartate 291, isoleucine 292, and aspartate 339 each coordinate Ca(2+). Aspartate 291 contacts Mn(2+). Residues 495–514 form a disordered region; that stretch reads IRADERQVQPHSRQKVDGSR. The span at 496–514 shows a compositional bias: basic and acidic residues; that stretch reads RADERQVQPHSRQKVDGSR.

It belongs to the adenylyl cyclase class-4/guanylyl cyclase family. Pyrimidine cyclase subfamily. Monomer. It depends on a divalent metal cation as a cofactor.

Its subcellular location is the cytoplasm. The enzyme catalyses UTP = 3',5'-cyclic UMP + diphosphate. Its function is as follows. Pycsar (pyrimidine cyclase system for antiphage resistance) provides immunity against bacteriophage. The pyrimidine cyclase (PycC) synthesizes cyclic nucleotides in response to infection; these serve as specific second messenger signals. The signals activate the adjacent effector, leading to bacterial cell death and abortive phage infection. A clade A Pycsar system. In terms of biological role, the pyrimidine cyclase gene of a two-gene Pycsar system, generates cyclic UMP (cUMP) from UTP, has little to no activity on ATP, CTP or GTP. Expression of this and adjacent effector PaPycTIR (AC P0DV41) probably confers resistance to bacteriophage. The genes are probably only expressed in response to bacteriophage infection. Does not have adenylyl or guanylyl cyclase activity. The polypeptide is Uridylate cyclase (Pseudomonas aeruginosa).